The sequence spans 272 residues: MAVPQPFPSGPHLQPAGALMEPQPSPRSLAEGFLQEELRLNDELRQLQFSELVGIVYNPVEYAWEPHRSYVTRYCQGPKQVLFLGMNPGPFGMAQTGVPFGEVSVVRDWLGLGGPVRTPPQEHPKRPVLGLECPQSEVSGARFWGFFRNLCGQPEVFFRHCFVHNLCPLLLLAPSGRNITPAELPAKQREQLLGVCDAALCRQVQLLGVRLVVGVGRVAEQRARRALASLMPEVQVEGLLHPSPRSPQANKGWEAVAKERLNELGLLPLLTS.

The segment at 1–27 (MAVPQPFPSGPHLQPAGALMEPQPSPR) is disordered. 3 residues coordinate substrate: Met-86, Phe-100, and Asn-165. Residues 175 to 189 (SGRNITPAELPAKQR) are DNA-binding. A substrate-binding site is contributed by His-241.

This sequence belongs to the uracil-DNA glycosylase (UDG) superfamily. SMUG1 family.

Its subcellular location is the nucleus. Its function is as follows. Recognizes base lesions in the genome and initiates base excision DNA repair. Acts as a monofunctional DNA glycosylase specific for uracil (U) residues in DNA with a preference for single-stranded DNA substrates. The activity is greater toward mismatches (U/G) compared to matches (U/A). Excises uracil (U), 5-formyluracil (fU) and uracil derivatives bearing an oxidized group at C5 [5-hydroxyuracil (hoU) and 5-hydroxymethyluracil (hmU)] in ssDNA and dsDNA, but not analogous cytosine derivatives (5-hydroxycytosine and 5-formylcytosine), nor other oxidized bases. The activity is damage-specific and salt-dependent. The substrate preference is the following: ssDNA &gt; dsDNA (G pair) = dsDNA (A pair) at low salt concentration, and dsDNA (G pair) &gt; dsDNA (A pair) &gt; ssDNA at high salt concentration. The chain is Single-strand selective monofunctional uracil DNA glycosylase (SMUG1) from Bos taurus (Bovine).